We begin with the raw amino-acid sequence, 187 residues long: Ion-translocating oxidoreductase complex subunit B (187 aa).

A hydrophobic region spans residues Met1–Ala26. The 4Fe-4S domain occupies Glu32–Val90. 12 residues coordinate [4Fe-4S] cluster: Cys49, Cys52, Cys57, Cys73, Cys115, Cys118, Cys121, Cys125, Cys145, Cys148, Cys151, and Cys155. 4Fe-4S ferredoxin-type domains are found at residues Lys106 to Lys135 and Ala136 to Val165.

It belongs to the 4Fe4S bacterial-type ferredoxin family. RnfB subfamily. As to quaternary structure, the complex is composed of six subunits: RnfA, RnfB, RnfC, RnfD, RnfE and RnfG. The cofactor is [4Fe-4S] cluster.

It is found in the cell inner membrane. In terms of biological role, part of a membrane-bound complex that couples electron transfer with translocation of ions across the membrane. The sequence is that of Ion-translocating oxidoreductase complex subunit B from Aeromonas hydrophila subsp. hydrophila (strain ATCC 7966 / DSM 30187 / BCRC 13018 / CCUG 14551 / JCM 1027 / KCTC 2358 / NCIMB 9240 / NCTC 8049).